A 323-amino-acid chain; its full sequence is Beta-ketoacyl-[acyl-carrier-protein] synthase III (323 aa).

Catalysis depends on residues cysteine 113 and histidine 250. The interval glutamine 251 to arginine 255 is ACP-binding. Residue asparagine 280 is part of the active site.

This sequence belongs to the thiolase-like superfamily. FabH family. Homodimer.

Its subcellular location is the cytoplasm. The enzyme catalyses malonyl-[ACP] + acetyl-CoA + H(+) = 3-oxobutanoyl-[ACP] + CO2 + CoA. It participates in lipid metabolism; fatty acid biosynthesis. Its function is as follows. Catalyzes the condensation reaction of fatty acid synthesis by the addition to an acyl acceptor of two carbons from malonyl-ACP. Catalyzes the first condensation reaction which initiates fatty acid synthesis and may therefore play a role in governing the total rate of fatty acid production. Possesses both acetoacetyl-ACP synthase and acetyl transacylase activities. Its substrate specificity determines the biosynthesis of branched-chain and/or straight-chain of fatty acids. This Rhizobium meliloti (strain 1021) (Ensifer meliloti) protein is Beta-ketoacyl-[acyl-carrier-protein] synthase III.